Consider the following 119-residue polypeptide: UPF0102 protein HI_1656 (119 aa).

This sequence belongs to the UPF0102 family.

The chain is UPF0102 protein HI_1656 from Haemophilus influenzae (strain ATCC 51907 / DSM 11121 / KW20 / Rd).